A 152-amino-acid chain; its full sequence is Ribosome maturation factor RimP (152 aa).

This sequence belongs to the RimP family.

The protein localises to the cytoplasm. Functionally, required for maturation of 30S ribosomal subunits. The chain is Ribosome maturation factor RimP from Porphyromonas gingivalis (strain ATCC BAA-308 / W83).